A 162-amino-acid polypeptide reads, in one-letter code: MHLADLIETTLSGMGYELVELERAPAGLLRVYIDQPETGIAIEDCEKVSRQLTHVFTVENVDYERLEVSSPGLDRPLKKLADFVRFAGAEARVTLRLPVNGQKNFTGILREPTGAAGEEKIGLEFEGKDGPALLEFAVSDVDKARLVPVIDFKGNQRKGNKQ.

This sequence belongs to the RimP family.

It is found in the cytoplasm. Functionally, required for maturation of 30S ribosomal subunits. The chain is Ribosome maturation factor RimP from Cupriavidus taiwanensis (strain DSM 17343 / BCRC 17206 / CCUG 44338 / CIP 107171 / LMG 19424 / R1) (Ralstonia taiwanensis (strain LMG 19424)).